A 617-amino-acid polypeptide reads, in one-letter code: V-type proton ATPase catalytic subunit A (617 aa).

250-257 (GAFGCGKT) serves as a coordination point for ATP. Ser-384 is subject to Phosphoserine; by AMPK.

Belongs to the ATPase alpha/beta chains family. As to quaternary structure, V-ATPase is a heteromultimeric enzyme made up of two complexes: the ATP-hydrolytic V1 complex and the proton translocation V0 complex. The V1 complex consists of three catalytic AB heterodimers that form a heterohexamer, three peripheral stalks each consisting of EG heterodimers, one central rotor including subunits D and F, and the regulatory subunits C and H. The proton translocation complex V0 consists of the proton transport subunit a, a ring of proteolipid subunits c9c'', rotary subunit d, subunits e and f, and the accessory subunits ATP6AP1/Ac45 and ATP6AP2/PRR. Interacts with the V0 complex V-ATPase subunit a4 ATP6V0A4. Interacts with WFS1. Interacts with alpha-crystallin B chain/CRYAB and with MTOR, forming a ternary complex. Post-translationally, phosphorylation at Ser-384 by AMPK down-regulates its enzyme activity.

The protein resides in the cytoplasm. It localises to the cytosol. The protein localises to the cytoplasmic vesicle. Its subcellular location is the secretory vesicle. It is found in the clathrin-coated vesicle membrane. The protein resides in the lysosome. The enzyme catalyses ATP + H2O + 4 H(+)(in) = ADP + phosphate + 5 H(+)(out). Its activity is regulated as follows. ATP hydrolysis occurs at the interface between the nucleotide-binding domains of subunits A and B. ATP hydrolysis triggers a conformational change in the subunits D and F, which induces a shift of subunit d. The c-ring is subsequently rotated and results in a continuous proton translocation across the membrane. Its function is as follows. Catalytic subunit of the V1 complex of vacuolar(H+)-ATPase (V-ATPase), a multisubunit enzyme composed of a peripheral complex (V1) that hydrolyzes ATP and a membrane integral complex (V0) that translocates protons. V-ATPase is responsible for acidifying and maintaining the pH of intracellular compartments and in some cell types, is targeted to the plasma membrane, where it is responsible for acidifying the extracellular environment. In aerobic conditions, involved in intracellular iron homeostasis, thus triggering the activity of Fe(2+) prolyl hydroxylase (PHD) enzymes, and leading to HIF1A hydroxylation and subsequent proteasomal degradation. May play a role in neurite development and synaptic connectivity. In Mus musculus (Mouse), this protein is V-type proton ATPase catalytic subunit A (Atp6v1a).